Reading from the N-terminus, the 554-residue chain is MGGFLSHLTPEQNVEALKASCGPVRGNIYKHDDVIVDGYLGIPYAKPPVGELRFKKPVTVDVWTEIKDCYKYGPACVQTGGFEQIAGPRTPTPEEAGCLTLNVFTPRNASSEFKNGRPVMVYIHGGGYELCASSDFCAYSLSGTLPLKDVVVVSINYRLGVFGFLTTGDNVCPGNFGLWDQTLALKWVQKHISSFGGDPNCVTVFGQSAGGASTDLLSLSPHSRDLFQRFIPISGTAHCDFAIRASENQAKIFREFAEFHGFSGRDSSALFKWYQEQSPETLSNVKGYKKSISGFLTFIPNLDGDFFPKPLDELRKEAPKKQMMTGVTEYEGLMLASMNPAFSPADVGLTLMPQGIYGKDVVSNPDEIQKIFYEKYVEGVDKSDELAMRKKLCEALGDEFFNVGVIQAAKNAAKHGNEVYFYTFEYVNPDSFGMWDGMMPFKAAVHCTELRYLLGEGVYSKFEPTEEDRKVMETTTTLFSNFAKYGNPNGKGATAEIWEKYSLNRPERHYRISYPKCEMRDVYHEGRIQFLEKIDGDSDKYQELVYGKKKSAKI.

A lipid anchor (N-myristoyl glycine) is attached at Gly-2. Cysteines 76 and 98 form a disulfide. Ser-208 serves as the catalytic Acyl-ester intermediate. Active-site charge relay system residues include Glu-331 and His-446.

This sequence belongs to the type-B carboxylesterase/lipase family.

The protein localises to the cytoplasm. It localises to the cell membrane. The enzyme catalyses a carboxylic ester + H2O = an alcohol + a carboxylate + H(+). The protein is Esterase cest-33 of Caenorhabditis elegans.